The chain runs to 519 residues: F-box only protein 31-A (519 aa).

A disordered region spans residues 11 to 37 (GQSGGCRRRQQRKGAGNDPELEDEEEE). The region spanning 54–100 (PHSLLLLPPEILVEIFSLLPGTELGGLAQVCSKFRQILTTDTIWKRR) is the F-box domain. Zn(2+)-binding residues include Cys-196, His-204, Cys-220, and His-226. Residues 369–390 (REQRQTDNEEDDGRGAGPDKAE) show a composition bias toward basic and acidic residues. The disordered stretch occupies residues 369–424 (REQRQTDNEEDDGRGAGPDKAEPAQQPAPLLRPPNEDANGADDDGDGGEQKPPNVQ).

This sequence belongs to the FBXO31 family. Part of a SCF (SKP1-cullin-F-box) protein ligase complex SCF(FBXO31).

The protein localises to the cytoplasm. The protein operates within protein modification; protein ubiquitination. Its function is as follows. Substrate-recognition component of the SCF(FBXO31) protein ligase complex, which specifically mediates the ubiquitination of proteins amidated at their C-terminus in response to oxidative stress, leading to their degradation by the proteasome. Fbxo31 specifically recognizes and binds C-terminal peptides bearing an amide: C-terminal amidation in response to oxidative stress takes place following protein fragmentation. The SCF(FBXO31) also plays a role in G1 arrest following DNA damage by mediating ubiquitination of phosphorylated cyclin-D1 (ccnd1), promoting its degradation by the proteasome, resulting in G1 arrest. The SCF(FBXO31) complex is however not a major regulator of ccnd1 stability during the G1/S transition. This Xenopus laevis (African clawed frog) protein is F-box only protein 31-A (fbxo31-a).